We begin with the raw amino-acid sequence, 227 residues long: Transmembrane emp24 domain-containing protein 4 (227 aa).

The first 29 residues, 1–29 (MAGVGVGPLQGMVRFGLLVLTVCAACARG), serve as a signal peptide directing secretion. Topologically, residues 30 to 194 (LYFHIGETEK…RLTSESTNQR (165 aa)) are lumenal. A GOLD domain is found at 39–137 (KRCFIEEIPD…KLRVHLDIQV (99 aa)). The N-linked (GlcNAc...) asparagine glycan is linked to N117. A coiled-coil region spans residues 147-176 (IAAKDKLTELQLRARQLLDQVEQIQKEQDY). The helical transmembrane segment at 195–212 (VLWWSIAQTVILILTGIW) threads the bilayer. The Cytoplasmic segment spans residues 213 to 227 (QMRHLKSFFEAKKLV). The COPII vesicle coat-binding signature appears at 220 to 221 (FF). Residues 220–227 (FFEAKKLV) carry the COPI vesicle coat-binding motif.

This sequence belongs to the EMP24/GP25L family.

The protein resides in the endoplasmic reticulum membrane. Functionally, involved in vesicular protein trafficking, mainly in the early secretory pathway. Involved in the maintenance of the Golgi apparatus. Appears to play a role in the biosynthesis of secreted cargo including processing. Involved in endoplasmic reticulum stress response. May play a role in the regulation of heat-shock response and apoptosis. The sequence is that of Transmembrane emp24 domain-containing protein 4 (Tmed4) from Mus musculus (Mouse).